The primary structure comprises 142 residues: Universal stress protein G (142 aa).

It belongs to the universal stress protein A family.

The protein is Universal stress protein G (uspG) of Escherichia coli O157:H7.